A 294-amino-acid chain; its full sequence is HTH-type transcriptional regulator TcbR (294 aa).

One can recognise an HTH lysR-type domain in the interval 1 to 58; it reads MEFRQLKYFIAVAEAGNMAAAAKRLHVSQPPITRQMQALEADLGVVLLERSHRGIELT. A DNA-binding region (H-T-H motif) is located at residues 18–37; that stretch reads MAAAAKRLHVSQPPITRQMQ.

It belongs to the LysR transcriptional regulatory family.

In terms of biological role, involved in regulation of chlorinated catechol metabolism. Transcriptional activator of the tcbCDEF chlorocatechol oxidative operon. May bind 2-chloromuconate as an inducer. The polypeptide is HTH-type transcriptional regulator TcbR (tcbR) (Pseudomonas sp. (strain P51)).